We begin with the raw amino-acid sequence, 500 residues long: Aspartyl/glutamyl-tRNA(Asn/Gln) amidotransferase subunit B (500 aa).

It belongs to the GatB/GatE family. GatB subfamily. Heterotrimer of A, B and C subunits.

The enzyme catalyses L-glutamyl-tRNA(Gln) + L-glutamine + ATP + H2O = L-glutaminyl-tRNA(Gln) + L-glutamate + ADP + phosphate + H(+). It catalyses the reaction L-aspartyl-tRNA(Asn) + L-glutamine + ATP + H2O = L-asparaginyl-tRNA(Asn) + L-glutamate + ADP + phosphate + 2 H(+). Its function is as follows. Allows the formation of correctly charged Asn-tRNA(Asn) or Gln-tRNA(Gln) through the transamidation of misacylated Asp-tRNA(Asn) or Glu-tRNA(Gln) in organisms which lack either or both of asparaginyl-tRNA or glutaminyl-tRNA synthetases. The reaction takes place in the presence of glutamine and ATP through an activated phospho-Asp-tRNA(Asn) or phospho-Glu-tRNA(Gln). This chain is Aspartyl/glutamyl-tRNA(Asn/Gln) amidotransferase subunit B, found in Thermosynechococcus vestitus (strain NIES-2133 / IAM M-273 / BP-1).